The primary structure comprises 205 residues: Large ribosomal subunit protein uL4 (205 aa).

Residues 43–77 (RRRSGTASTKGRSDVAGSRAKLFRQKGTGRARRGD) form a disordered region. Residues 63–73 (KLFRQKGTGRA) show a composition bias toward basic residues.

This sequence belongs to the universal ribosomal protein uL4 family. As to quaternary structure, part of the 50S ribosomal subunit.

Functionally, one of the primary rRNA binding proteins, this protein initially binds near the 5'-end of the 23S rRNA. It is important during the early stages of 50S assembly. It makes multiple contacts with different domains of the 23S rRNA in the assembled 50S subunit and ribosome. Its function is as follows. Forms part of the polypeptide exit tunnel. The polypeptide is Large ribosomal subunit protein uL4 (Desulfosudis oleivorans (strain DSM 6200 / JCM 39069 / Hxd3) (Desulfococcus oleovorans)).